The chain runs to 279 residues: UTP--glucose-1-phosphate uridylyltransferase (279 aa).

Belongs to the UDPGP type 2 family.

It catalyses the reaction alpha-D-glucose 1-phosphate + UTP + H(+) = UDP-alpha-D-glucose + diphosphate. Its function is as follows. May play a role in stationary phase survival. The chain is UTP--glucose-1-phosphate uridylyltransferase (galU) from Pseudomonas aeruginosa.